The chain runs to 489 residues: FK506-binding protein 4 (489 aa).

Disordered regions lie at residues 40–157 and 199–378; these read PDET…GLEL and GNYV…TTGT. The span at 66–88 shows a compositional bias: acidic residues; the sequence is MDIDESDDDYEEDSEEDSDDEEI. Positions 93 to 109 are enriched in basic and acidic residues; the sequence is SDKEKARKLKEAAALKE. Composition is skewed to acidic residues over residues 110–125, 143–157, and 208–250; these read LEDEDEDDDSEGDDEN, TDDDEDDESDEGLEL, and GPSE…DELD. 3 stretches are compositionally biased toward basic and acidic residues: residues 267–282, 292–303, and 328–353; these read APKLVESKGKNKRTAD, MMAKDGKAKGAD, and EQKKEAKVAKEGKEGKEGKEAKEAKK. Positions 362–378 are enriched in polar residues; the sequence is QGPTPSGQKPGETTTGT. In terms of domain architecture, PPIase FKBP-type spans 406 to 489; that stretch reads VAMRYIGKLE…IFDVKLLEIK (84 aa).

This sequence belongs to the FKBP-type PPIase family. FKBP3/4 subfamily. Binds to histones H3 and H4.

Its subcellular location is the nucleus. The catalysed reaction is [protein]-peptidylproline (omega=180) = [protein]-peptidylproline (omega=0). Its activity is regulated as follows. Inhibited by both FK506 and rapamycin. Functionally, PPIase that acts as a histone chaperone. Histone proline isomerase that increases the rate of cis-trans isomerization at prolines on the histone H3 N-terminal tail. Proline isomerization influences H3 methylation thereby regulating gene expression. The protein is FK506-binding protein 4 (fpr4) of Aspergillus fumigatus (strain ATCC MYA-4609 / CBS 101355 / FGSC A1100 / Af293) (Neosartorya fumigata).